The following is an 865-amino-acid chain: Probable beta-glucosidase J (865 aa).

Residue Asp233 is part of the active site. Residues Asn330, Asn447, Asn503, and Asn764 are each glycosylated (N-linked (GlcNAc...) asparagine). A PA14 domain is found at 411–579 (TGQPGYTFRV…DTDTAIQQAV (169 aa)).

Belongs to the glycosyl hydrolase 3 family.

It localises to the secreted. The enzyme catalyses Hydrolysis of terminal, non-reducing beta-D-glucosyl residues with release of beta-D-glucose.. The protein operates within glycan metabolism; cellulose degradation. Its function is as follows. Beta-glucosidases are one of a number of cellulolytic enzymes involved in the degradation of cellulosic biomass. Catalyzes the last step releasing glucose from the inhibitory cellobiose. This is Probable beta-glucosidase J (bglJ) from Aspergillus fumigatus (strain CBS 144.89 / FGSC A1163 / CEA10) (Neosartorya fumigata).